A 118-amino-acid chain; its full sequence is Large ribosomal subunit protein bL20 (118 aa).

Belongs to the bacterial ribosomal protein bL20 family.

In terms of biological role, binds directly to 23S ribosomal RNA and is necessary for the in vitro assembly process of the 50S ribosomal subunit. It is not involved in the protein synthesizing functions of that subunit. The chain is Large ribosomal subunit protein bL20 from Hahella chejuensis (strain KCTC 2396).